Reading from the N-terminus, the 237-residue chain is CDP-diacylglycerol--serine O-phosphatidyltransferase (237 aa).

Transmembrane regions (helical) follow at residues 3-23, 25-45, 73-93, 95-115, 124-144, 150-170, 184-204, and 207-227; these read INPLYLFPNLFTASSIFLGMM, IFYASSYQFVMACWLVVASLI, VIAFGVAPSLIAYFYVGYNFG, IGMAVSALFVIFGAIRLARFN, YSFIGIPIPAAAVLVVLCVLL, FLEGNTEKLFLSFIVLLGVLM, WNLKLFILVLIFLSLVFVRPL, and LSVFMGLYLIYGIIRWLFLMV.

Belongs to the CDP-alcohol phosphatidyltransferase class-I family.

It localises to the cell membrane. The catalysed reaction is a CDP-1,2-diacyl-sn-glycerol + L-serine = a 1,2-diacyl-sn-glycero-3-phospho-L-serine + CMP + H(+). The protein is CDP-diacylglycerol--serine O-phosphatidyltransferase (pssA) of Helicobacter pylori (strain ATCC 700392 / 26695) (Campylobacter pylori).